The sequence spans 87 residues: Small ribosomal subunit protein uS17 (87 aa).

It belongs to the universal ribosomal protein uS17 family. As to quaternary structure, part of the 30S ribosomal subunit.

One of the primary rRNA binding proteins, it binds specifically to the 5'-end of 16S ribosomal RNA. In Exiguobacterium sibiricum (strain DSM 17290 / CCUG 55495 / CIP 109462 / JCM 13490 / 255-15), this protein is Small ribosomal subunit protein uS17.